The chain runs to 683 residues: uncharacterized protein (683 aa).

Coiled-coil stretches lie at residues 62-124 (PEHY…RKER), 155-259 (TTTN…KLSQ), and 346-376 (KKSLLTVKDSVQSLKTQLDELKRTLENDGDV). The disordered stretch occupies residues 213-237 (QDQVESQTGPKKRRKSPIENQPTAG).

This is an uncharacterized protein from Invertebrate iridescent virus 3 (IIV-3).